A 346-amino-acid polypeptide reads, in one-letter code: Protein RecA (346 aa).

67–74 (GPESSGKT) contacts ATP.

This sequence belongs to the RecA family.

The protein resides in the cytoplasm. Functionally, can catalyze the hydrolysis of ATP in the presence of single-stranded DNA, the ATP-dependent uptake of single-stranded DNA by duplex DNA, and the ATP-dependent hybridization of homologous single-stranded DNAs. It interacts with LexA causing its activation and leading to its autocatalytic cleavage. The sequence is that of Protein RecA from Saccharopolyspora erythraea (strain ATCC 11635 / DSM 40517 / JCM 4748 / NBRC 13426 / NCIMB 8594 / NRRL 2338).